The chain runs to 502 residues: ATP synthase subunit alpha (502 aa).

A disordered region spans residues 115 to 136 (VDGLGPIHTTKTRPIESPAPGV). An ATP-binding site is contributed by 169–176 (GDRQTGKT).

The protein belongs to the ATPase alpha/beta chains family. F-type ATPases have 2 components, CF(1) - the catalytic core - and CF(0) - the membrane proton channel. CF(1) has five subunits: alpha(3), beta(3), gamma(1), delta(1), epsilon(1). CF(0) has three main subunits: a(1), b(2) and c(9-12). The alpha and beta chains form an alternating ring which encloses part of the gamma chain. CF(1) is attached to CF(0) by a central stalk formed by the gamma and epsilon chains, while a peripheral stalk is formed by the delta and b chains.

The protein resides in the cell membrane. The enzyme catalyses ATP + H2O + 4 H(+)(in) = ADP + phosphate + 5 H(+)(out). Functionally, produces ATP from ADP in the presence of a proton gradient across the membrane. The alpha chain is a regulatory subunit. This Bacillus cytotoxicus (strain DSM 22905 / CIP 110041 / 391-98 / NVH 391-98) protein is ATP synthase subunit alpha.